The sequence spans 494 residues: Ketol-acid reductoisomerase (NADP(+)) (494 aa).

A KARI N-terminal Rossmann domain is found at 14–208; sequence LDQLGRCRFM…GGHRAGCLES (195 aa). NADP(+) contacts are provided by residues 45-48, Arg-68, Arg-76, Ser-78, and 108-110; these read CGAQ and DKQ. The active site involves His-132. NADP(+) is bound at residue Gly-158. KARI C-terminal knotted domains follow at residues 209–344 and 345–487; these read SFVA…NYPS and TDVE…MTDM. 4 residues coordinate Mg(2+): Asp-217, Glu-221, Glu-389, and Glu-393. Ser-414 is a binding site for substrate.

The protein belongs to the ketol-acid reductoisomerase family. The cofactor is Mg(2+).

It carries out the reaction (2R)-2,3-dihydroxy-3-methylbutanoate + NADP(+) = (2S)-2-acetolactate + NADPH + H(+). The catalysed reaction is (2R,3R)-2,3-dihydroxy-3-methylpentanoate + NADP(+) = (S)-2-ethyl-2-hydroxy-3-oxobutanoate + NADPH + H(+). Its pathway is amino-acid biosynthesis; L-isoleucine biosynthesis; L-isoleucine from 2-oxobutanoate: step 2/4. The protein operates within amino-acid biosynthesis; L-valine biosynthesis; L-valine from pyruvate: step 2/4. Functionally, involved in the biosynthesis of branched-chain amino acids (BCAA). Catalyzes an alkyl-migration followed by a ketol-acid reduction of (S)-2-acetolactate (S2AL) to yield (R)-2,3-dihydroxy-isovalerate. In the isomerase reaction, S2AL is rearranged via a Mg-dependent methyl migration to produce 3-hydroxy-3-methyl-2-ketobutyrate (HMKB). In the reductase reaction, this 2-ketoacid undergoes a metal-dependent reduction by NADPH to yield (R)-2,3-dihydroxy-isovalerate. The protein is Ketol-acid reductoisomerase (NADP(+)) of Vibrio vulnificus (strain CMCP6).